A 163-amino-acid chain; its full sequence is Shikimate kinase (163 aa).

10 to 15 contributes to the ATP binding site; it reads GVGKSS. S14 is a Mg(2+) binding site. Positions 28, 52, and 75 each coordinate substrate. R116 provides a ligand contact to ATP. R134 is a binding site for substrate. R151 serves as a coordination point for ATP.

The protein belongs to the shikimate kinase family. Monomer. Mg(2+) is required as a cofactor.

It localises to the cytoplasm. The enzyme catalyses shikimate + ATP = 3-phosphoshikimate + ADP + H(+). The protein operates within metabolic intermediate biosynthesis; chorismate biosynthesis; chorismate from D-erythrose 4-phosphate and phosphoenolpyruvate: step 5/7. Catalyzes the specific phosphorylation of the 3-hydroxyl group of shikimic acid using ATP as a cosubstrate. This is Shikimate kinase from Streptococcus thermophilus (strain ATCC BAA-491 / LMD-9).